The chain runs to 435 residues: Transcriptional enhancer factor TEF-5 (435 aa).

The span at 1–12 shows a compositional bias: polar residues; it reads MASNSWNASSSP. The tract at residues 1 to 34 is disordered; that stretch reads MASNSWNASSSPGEAREDGPEGLDKGLDNDAEGV. A2 carries the N-acetylalanine modification. Positions 14–28 are enriched in basic and acidic residues; sequence EAREDGPEGLDKGLD. The segment at residues 28–104 is a DNA-binding region (TEA); the sequence is DNDAEGVWSP…QVLARKKVRE (77 aa). S148 is modified (phosphoserine). The transcriptional activation stretch occupies residues 173-435; the sequence is GPSQDIKPFA…QHHVYKLVKD (263 aa).

As to quaternary structure, interacts with YAP1 and WWTR1/TAZ. In terms of tissue distribution, preferentially expressed in the placenta.

It localises to the nucleus. Its function is as follows. Transcription factor which plays a key role in the Hippo signaling pathway, a pathway involved in organ size control and tumor suppression by restricting proliferation and promoting apoptosis. The core of this pathway is composed of a kinase cascade wherein MST1/MST2, in complex with its regulatory protein SAV1, phosphorylates and activates LATS1/2 in complex with its regulatory protein MOB1, which in turn phosphorylates and inactivates YAP1 oncoprotein and WWTR1/TAZ. Acts by mediating gene expression of YAP1 and WWTR1/TAZ, thereby regulating cell proliferation, migration and epithelial mesenchymal transition (EMT) induction. Binds to multiple functional elements of the human chorionic somatomammotropin-B gene enhancer. The sequence is that of Transcriptional enhancer factor TEF-5 (TEAD3) from Homo sapiens (Human).